The chain runs to 512 residues: Intermediate filament family orphan 2 (512 aa).

Residues 50-479 enclose the IF rod domain; it reads NIHLLKGLNV…RLIKGSADRN (430 aa). The disordered stretch occupies residues 473-512; it reads KGSADRNSPSPSSVASSDSGSTDEIQEDLEREADVEPMVS. Residues 480-492 are compositionally biased toward low complexity; the sequence is SPSPSSVASSDSG. Positions 496-512 are enriched in acidic residues; the sequence is EIQEDLEREADVEPMVS.

It belongs to the intermediate filament family.

The sequence is that of Intermediate filament family orphan 2 (Iffo2) from Mus musculus (Mouse).